Reading from the N-terminus, the 163-residue chain is Large ribosomal subunit protein uL10 (163 aa).

It belongs to the universal ribosomal protein uL10 family. As to quaternary structure, part of the ribosomal stalk of the 50S ribosomal subunit. The N-terminus interacts with L11 and the large rRNA to form the base of the stalk. The C-terminus forms an elongated spine to which L12 dimers bind in a sequential fashion forming a multimeric L10(L12)X complex.

Functionally, forms part of the ribosomal stalk, playing a central role in the interaction of the ribosome with GTP-bound translation factors. The protein is Large ribosomal subunit protein uL10 of Mannheimia succiniciproducens (strain KCTC 0769BP / MBEL55E).